A 760-amino-acid polypeptide reads, in one-letter code: Pentatricopeptide repeat-containing protein At1g20230 (760 aa).

15 PPR repeats span residues 49–79, 80–114, 115–149, 150–180, 181–215, 216–250, 251–285, 286–316, 317–351, 352–386, 387–421, 422–452, 453–487, 488–523, and 524–554; these read DGYI…IPDP, TIYS…GLIP, DSHV…GLDM, DAFV…MSDK, DVVT…GIEA, NIVS…GFCP, DQVT…GLLK, DKCV…FEMM, EAGV…TMEL, NVVS…GVKP, NHVT…HLLD, NVHV…MPTK, NLVC…RLKP, DFIS…GIKP, and RLEH…MPFE. The interval 559–634 is type E motif; that stretch reads VWGALLNSCR…NPGCSWIQVK (76 aa). A type E(+) motif region spans residues 635–665; it reads NRVYTLLAGDKSHPQIDQITEKMDEISKEMR. The type DYW motif stretch occupies residues 666–760; sequence KSGHRPNLDF…DGICSCGDFW (95 aa).

Belongs to the PPR family. PCMP-H subfamily.

This chain is Pentatricopeptide repeat-containing protein At1g20230 (PCMP-H21), found in Arabidopsis thaliana (Mouse-ear cress).